Reading from the N-terminus, the 416-residue chain is Phosphoglycerate kinase (416 aa).

(2R)-3-phosphoglycerate contacts are provided by Val23, Asp24, Phe25, Asn26, Gln38, Arg39, Ser62, His63, Gly65, Arg66, Leu121, Arg122, His169, and Arg170. Gly213 provides a ligand contact to ADP. Residue Gly213 coordinates CDP. Residues Ala214 and Lys215 each contribute to the AMP site. Ala214 provides a ligand contact to ATP. Ala214 provides a ligand contact to Mg(2+). Asp218 lines the CDP pocket. Asp218 is a binding site for Mg(2+). Lys219 contacts AMP. Position 219 (Lys219) interacts with ATP. Gly237 is a binding site for ADP. A CDP-binding site is contributed by Gly237. Gly238 and Gly312 together coordinate AMP. Residues Gly238 and Gly312 each coordinate ATP. The CDP site is built by Gly337, Ala339, and Phe342. Phe342 provides a ligand contact to ADP. Glu343 provides a ligand contact to AMP. Residues Glu343, Asp374, and Thr375 each coordinate ATP. Asp374 is a binding site for Mg(2+).

The protein belongs to the phosphoglycerate kinase family. In terms of assembly, monomer. Mg(2+) serves as cofactor.

The protein localises to the cytoplasm. The protein resides in the mitochondrion. The catalysed reaction is (2R)-3-phosphoglycerate + ATP = (2R)-3-phospho-glyceroyl phosphate + ADP. Its pathway is carbohydrate degradation; glycolysis; pyruvate from D-glyceraldehyde 3-phosphate: step 2/5. In terms of biological role, catalyzes one of the two ATP producing reactions in the glycolytic pathway via the reversible conversion of 1,3-diphosphoglycerate to 3-phosphoglycerate. Both L- and D- forms of purine and pyrimidine nucleotides can be used as substrates, but the activity is much lower on pyrimidines. Negatively regulates the biosynthesis of acetyl-CoA from pyruvate in the mitochondrion. The sequence is that of Phosphoglycerate kinase (PGK) from Funneliformis mosseae (Endomycorrhizal fungus).